The sequence spans 217 residues: Deoxyribose-phosphate aldolase (217 aa).

The active-site Proton donor/acceptor is aspartate 90. The active-site Schiff-base intermediate with acetaldehyde is lysine 152. The active-site Proton donor/acceptor is the lysine 181.

Belongs to the DeoC/FbaB aldolase family. DeoC type 1 subfamily.

It localises to the cytoplasm. The enzyme catalyses 2-deoxy-D-ribose 5-phosphate = D-glyceraldehyde 3-phosphate + acetaldehyde. It participates in carbohydrate degradation; 2-deoxy-D-ribose 1-phosphate degradation; D-glyceraldehyde 3-phosphate and acetaldehyde from 2-deoxy-alpha-D-ribose 1-phosphate: step 2/2. In terms of biological role, catalyzes a reversible aldol reaction between acetaldehyde and D-glyceraldehyde 3-phosphate to generate 2-deoxy-D-ribose 5-phosphate. This chain is Deoxyribose-phosphate aldolase, found in Metamycoplasma hominis (Mycoplasma hominis).